A 571-amino-acid chain; its full sequence is MSIMLPINNNFSLSQNSFYNTISGTYADYFSAWDKWEKQALPGENRNEAVSLLKECLINQFSELQLNRLNLSSLPDNLPPQITVLEITQNALISLPELPASLEYLDACDNRLSTLPELPASLKHLDVDNNQLTMLPELPALLEYINADNNQLTMLPELPTSLEVLSVRNNQLTFLPELPESLEALDVSTNLLESLPAVPVRNHHSEETEIFFRCRENRITHIPENILSLDPTCTIILEDNPLSSRIRESLSQQTAQPDYHGPRIYFSMSDGQQNTLHRPLADAVTAWFPENKQSDVSQIWHAFEHEEHANTFSAFLDRLSDTVSARNTSGFREQVAAWLEKLSTSAELRQQSFAVAADATESCEDRVALTWNNLRKTLLVHQASEGLFDNDTGALLSLGREMFRLEILEDIARDKVRTLHFVDEIEVYLAFQTMLAEKLQLSTAVKEMRFYGVSGVTANDLRTAEAMVRSREENEFTDWFSLWGPWHAVLKRTEADRWAQAEEQKYEMLENEYSQRVADRLKASGLSGDADAEREAGAQVMRETEQQIYRQVTDEVLALRLSENGSQLHHS.

Residues 1 to 260 are interaction with target proteins; sequence MSIMLPINNN…SQQTAQPDYH (260 aa). 9 LRR repeats span residues 58–81, 83–99, 100–119, 120–144, 146–159, 160–184, 186–202, 205–229, and 232–260; these read INQF…LPPQ, TVLE…PELP, ASLE…PELP, ASLK…LLEY, NADN…PELP, TSLE…SLEA, DVST…PVRN, SEET…ILSL, and TCTI…PDYH. The segment at 269–278 is linker; sequence SDGQQNTLHR. The 293-residue stretch at 279 to 571 folds into the NEL domain; that stretch reads PLADAVTAWF…SENGSQLHHS (293 aa). Residues 279–571 form an E3 ubiquitin-protein ligase catalytic domain region; sequence PLADAVTAWF…SENGSQLHHS (293 aa). Cys-363 serves as the catalytic Glycyl thioester intermediate.

The protein belongs to the LRR-containing bacterial E3 ligase family. Post-translationally, ubiquitinated in the presence of host E1 ubiquitin-activating enzyme, E2 ubiquitin-conjugating enzyme UBE2D3 and ubiquitin.

The protein localises to the secreted. The protein resides in the host cytoplasm. It carries out the reaction S-ubiquitinyl-[E2 ubiquitin-conjugating enzyme]-L-cysteine + [acceptor protein]-L-lysine = [E2 ubiquitin-conjugating enzyme]-L-cysteine + N(6)-ubiquitinyl-[acceptor protein]-L-lysine.. In terms of biological role, effector proteins function to alter host cell physiology and promote bacterial survival in host tissues. This protein is an E3 ubiquitin ligase that interferes with host's ubiquitination pathway. Synthesizes a 'Lys-48'-linked ubiquitin chain, which requires non-covalent binding between ubiquitin and the host ubiquitin-conjugating enzyme UBE2D1. The protein is E3 ubiquitin-protein ligase ipaH3 (ipaH3) of Shigella flexneri.